The primary structure comprises 374 residues: Cytochrome b (374 aa).

The next 4 helical transmembrane spans lie at 25–45, 69–90, 105–125, and 170–190; these read FGSM…FLAI, WIIQ…YMHI, WLSG…GYVL, and FFAL…IHII. Heme b contacts are provided by H75 and H89. H174 and H188 together coordinate heme b. Position 193 (H193) interacts with a ubiquinone. 4 consecutive transmembrane segments (helical) span residues 218-238, 280-300, 312-332, and 339-358; these read YKDM…LSFT, LGGA…PFTH, LAQI…WTAT, and FITI…MINP.

Belongs to the cytochrome b family. As to quaternary structure, the cytochrome bc1 complex contains 3 respiratory subunits (MT-CYB, CYC1 and UQCRFS1), 2 core proteins (UQCRC1 and UQCRC2) and probably 6 low-molecular weight proteins. Heme b is required as a cofactor.

The protein localises to the mitochondrion inner membrane. Functionally, component of the ubiquinol-cytochrome c reductase complex (complex III or cytochrome b-c1 complex) that is part of the mitochondrial respiratory chain. The b-c1 complex mediates electron transfer from ubiquinol to cytochrome c. Contributes to the generation of a proton gradient across the mitochondrial membrane that is then used for ATP synthesis. The protein is Cytochrome b (MT-CYB) of Calliophis bivirgatus (Blue Malaysian coral snake).